Here is a 469-residue protein sequence, read N- to C-terminus: MTVQTFTPNQTTTLDTAKKTIEQQSQELTPSGGNKIGFVSLGCPKNLVDSERILTQLRTEGYEIVNSYHDSDVVIVNTCGFIDSAVQESLDTIGEALKENGKVIVTGCLGAREDEIREVHPGVLGITGPHAYENVLEHVHQFAPKPEHNPFTSLVPDHGVKLTPKHYAYLKISEGCNHRCTFCIIPSMRGDLVSRPVGEILSEAERLKNAGVKELLVISQDTSAYGVDSKHSLGFANGSPVRQNIKALSEELGKMGIWVRLHYVYPYPHVDDLIPLMAEGKILPYLDIPFQHASPNVLKAMKRPGRAERTLDQIKKWREICPELVIRSTFIVGFPGETDEDFEMLLEWLKEAQLDRVGCFKYSPVEGAAANDIDDQISEEVKQERFECFMLVQQEISAAKLQKRIGSTMKVIIDEVDEEGAIGRTYADAPEIDGLVYLNGETSLKAGELVDVLIEHADEYDLWGSLVRA.

An MTTase N-terminal domain is found at 34–144 (NKIGFVSLGC…VLEHVHQFAP (111 aa)). [4Fe-4S] cluster contacts are provided by C43, C79, C108, C176, C180, and C183. The 238-residue stretch at 162 to 399 (LTPKHYAYLK…MLVQQEISAA (238 aa)) folds into the Radical SAM core domain. Residues 402 to 468 (QKRIGSTMKV…EYDLWGSLVR (67 aa)) form the TRAM domain.

This sequence belongs to the methylthiotransferase family. RimO subfamily. [4Fe-4S] cluster is required as a cofactor.

It is found in the cytoplasm. The enzyme catalyses L-aspartate(89)-[ribosomal protein uS12]-hydrogen + (sulfur carrier)-SH + AH2 + 2 S-adenosyl-L-methionine = 3-methylsulfanyl-L-aspartate(89)-[ribosomal protein uS12]-hydrogen + (sulfur carrier)-H + 5'-deoxyadenosine + L-methionine + A + S-adenosyl-L-homocysteine + 2 H(+). In terms of biological role, catalyzes the methylthiolation of an aspartic acid residue of ribosomal protein uS12. The protein is Ribosomal protein uS12 methylthiotransferase RimO of Vibrio vulnificus (strain CMCP6).